Here is a 568-residue protein sequence, read N- to C-terminus: MSSQKVFGITGPVSTVGATAAENKLNDSLIQELKKEGSFETEQETANRVQVLKILQELAQRFVYEVSKKKNMSDGMARDAGGKIFTYGSYRLGVHGPGSDIDTLVVVPKHVTREDFFTVFDSLLRERKELDEIAPVPDAFVPIIKIKFSGISIDLICARLDQPQVPLSLTLSDKNLLRNLDEKDLRALNGTRVTDEILELVPKPNVFRIALRAIKLWAQRRAVYANIFGFPGGVAWAMLVARICQLYPNACSAVILNRFFIILSEWNWPQPVILKPIEDGPLQVRVWNPKIYAQDRSHRMPVITPAYPSMCATHNITESTKKVILQEFVRGVQITNDIFSNKKSWANLFEKNDFFFRYKFYLEITAYTRGSDEQHLKWSGLVESKVRLLVMKLEVLAGIKIAHPFTKPFESSYCCPTEDDYEMIQDKYGSHKTETALNALKLVTDENKEEESIKDAPKAYLSTMYIGLDFNIENKKEKVDIHIPCTEFVNLCRSFNEDYGDHKVFNLALRFVKGYDLPDEVFDENEKRPSKKSKRKNLDARHETVKRSKSDAASGDNINGTTAAVDVN.

ATP is bound by residues 87–89 (YGS), 99–102 (SDID), 100–102 (DID), aspartate 154, lysine 215, tyrosine 224, and 233–234 (GV). The Mg(2+) site is built by aspartate 100, aspartate 102, and aspartate 154. Serine 452 and serine 550 each carry phosphoserine. Positions 525-568 (NEKRPSKKSKRKNLDARHETVKRSKSDAASGDNINGTTAAVDVN) are disordered. Basic and acidic residues predominate over residues 536 to 550 (KNLDARHETVKRSKS).

It belongs to the poly(A) polymerase family. Component of the cleavage and polyadenylation factor (CPF) complex, which is composed of PTI1, SYC1, SSU72, GLC7, MPE1, REF2, PFS2, PTA1, YSH1/BRR5, SWD2, CFT2/YDH1, YTH1, CFT1/YHH1, FIP1 and PAP1. Interacts with FIR1 and RRP6. Mg(2+) serves as cofactor. Requires Mn(2+) as cofactor.

The protein resides in the nucleus. The catalysed reaction is RNA(n) + ATP = RNA(n)-3'-adenine ribonucleotide + diphosphate. In terms of biological role, polymerase component of the cleavage and polyadenylation factor (CPF) complex, which plays a key role in polyadenylation-dependent pre-mRNA 3'-end formation and cooperates with cleavage factors including the CFIA complex and NAB4/CFIB. This chain is Poly(A) polymerase (PAP1), found in Saccharomyces cerevisiae (strain ATCC 204508 / S288c) (Baker's yeast).